Here is a 483-residue protein sequence, read N- to C-terminus: MSSLLPVAVYGLEVPPGDILVPAQFEFPATIRITMAAIDPTAEPETDGQGNVPTVPRSTLKLIKTTAEEDDDEYLDIDGEDSEDDEESDDEEVNGGPSDPAKSKKARREAAIKKLLEATKEESDEEMEDADAKPNGKGKKDSKGKAKASESDDEKSDEDDEEGEPNFEEFVVCTLDTERTYQQPIDITITEGEKVFFVVKGTHKVYLTGNYVLPEGQDEEDDEDEEDYSDEEYDLPHGIELESDSDYESDELDEIDGTPRIKEIDTDEEEEEAPKLVDTSKKGNKKRPAEEAENLDDLVAKDKKQAEKQKKLKNNKGEAVPAENKDVKKEGKSDKKVQFAKDLEQGPSGPAKDKLEKKEEKKDDKADLKKPSLGVKVVQGVTIDDRKLGTGRTVKSGDRVSLRYIGKLTNGKVFDANKKGAPFTVRVGKGEVIKGWEIGLIGMQVGGERRLTIPPHLAYGSRAMPGIPANSTLVFDIKLLEIK.

Disordered regions lie at residues 41–171 (TAEP…EEFV) and 208–371 (TGNY…LKKP). Acidic residues predominate over residues 68–93 (EEDDDEYLDIDGEDSEDDEESDDEEV). Composition is skewed to basic and acidic residues over residues 108–121 (REAA…ATKE) and 130–150 (ADAK…KASE). 3 stretches are compositionally biased toward acidic residues: residues 151 to 167 (SDDE…EPNF), 216 to 233 (GQDE…DEEY), and 241 to 256 (LESD…DEID). 3 stretches are compositionally biased toward basic and acidic residues: residues 298 to 309 (LVAKDKKQAEKQ), 323 to 344 (ENKD…KDLE), and 351 to 370 (AKDK…DLKK). Residues 397 to 483 (GDRVSLRYIG…VFDIKLLEIK (87 aa)) enclose the PPIase FKBP-type domain.

This sequence belongs to the FKBP-type PPIase family. FKBP3/4 subfamily. As to quaternary structure, binds to histones H3 and H4.

Its subcellular location is the nucleus. The enzyme catalyses [protein]-peptidylproline (omega=180) = [protein]-peptidylproline (omega=0). Functionally, PPIase that acts as a histone chaperone. Histone proline isomerase that increases the rate of cis-trans isomerization at prolines on the histone H3 N-terminal tail. Proline isomerization influences H3 methylation thereby regulating gene expression. In Chaetomium thermophilum (strain DSM 1495 / CBS 144.50 / IMI 039719) (Thermochaetoides thermophila), this protein is FK506-binding protein 4 (FPR4).